The following is a 284-amino-acid chain: L-fucose dehydrogenase (284 aa).

NAD(+)-binding residues include R19, I21, D40, K41, D62, V63, N89, Y154, K158, I187, T189, and L191.

It belongs to the short-chain dehydrogenases/reductases (SDR) family.

The enzyme catalyses L-fucose + NAD(+) = L-fucono-1,5-lactone + NADH + H(+). It carries out the reaction D-arabinose + NAD(+) = D-arabinono-1,5-lactone + NADH + H(+). The catalysed reaction is L-galactose + NAD(+) = L-galactono-1,5-lactone + NADH + H(+). It participates in carbohydrate degradation; L-fucose degradation. In terms of biological role, catalyzes the NAD(+)-dependent oxidation of L-fucose, yielding L-fucono-1,5-lactone, which rapidly converts spontaneously to L-fucone-1,4-lactone. Can also act on D-arabinose and L-galactose, with lower catalytic efficiency. Does not use NADPH. May be the initial enzyme of the putative L-fucose degradation pathway in mammals. The sequence is that of L-fucose dehydrogenase (HSD17B14) from Oryctolagus cuniculus (Rabbit).